Here is a 190-residue protein sequence, read N- to C-terminus: Peptidyl-tRNA hydrolase (190 aa).

A tRNA-binding site is contributed by Y14. H19 (proton acceptor) is an active-site residue. The tRNA site is built by Y64, N66, and N112.

Belongs to the PTH family. In terms of assembly, monomer.

It localises to the cytoplasm. The enzyme catalyses an N-acyl-L-alpha-aminoacyl-tRNA + H2O = an N-acyl-L-amino acid + a tRNA + H(+). Functionally, hydrolyzes ribosome-free peptidyl-tRNAs (with 1 or more amino acids incorporated), which drop off the ribosome during protein synthesis, or as a result of ribosome stalling. Catalyzes the release of premature peptidyl moieties from peptidyl-tRNA molecules trapped in stalled 50S ribosomal subunits, and thus maintains levels of free tRNAs and 50S ribosomes. This Chlorobium phaeobacteroides (strain DSM 266 / SMG 266 / 2430) protein is Peptidyl-tRNA hydrolase.